The chain runs to 97 residues: Mapk-regulated corepressor-interacting protein 1 (97 aa).

The tract at residues 1-30 (MTSSPVSRVVYNGKRNSSHRSPPNSSEIFT) is disordered. S21 is subject to Phosphoserine. A Phosphothreonine modification is found at T30. At Y41 the chain carries Phosphotyrosine. Positions 77–97 (TFRPIDLSDLKRRNTQDAKKS) are disordered. Positions 80–84 (PIDLS) match the PXDLS motif motif. A compositionally biased stretch (basic and acidic residues) spans 82 to 97 (DLSDLKRRNTQDAKKS).

It belongs to the MCRIP family. Interacts (unphosphorylated form, via the PXDLS motif) with CTBP1, competitively inhibiting CTBP-ZEB1 interaction. Interacts with CTBP2. Interacts with MCRIP2. Interacts with DDX6. Phosphorylation by MAPK3/1 (ERK1/2) regulates MCRIP1 binding to CTBP(s).

It is found in the nucleus. It localises to the cytoplasm. The protein localises to the stress granule. The phosphorylation status of MCRIP1 functions as a molecular switch to regulate epithelial-mesenchymal transition. Unphosphorylated MCRIP1 binds to and inhibits the transcriptional corepressor CTBP(s). When phosphorylated by MAPK/ERK, MCRIP1 releases CTBP(s) resulting in transcriptional silencing of the E-cadherin gene and induction of epithelial-mesenchymal transition. This Bos taurus (Bovine) protein is Mapk-regulated corepressor-interacting protein 1 (MCRIP1).